Here is a 319-residue protein sequence, read N- to C-terminus: Acetyl-coenzyme A carboxylase carboxyl transferase subunit alpha (319 aa).

Positions 39–293 constitute a CoA carboxyltransferase C-terminal domain; it reads RLQKKSNDLT…KAVLEKQLHE (255 aa).

It belongs to the AccA family. Acetyl-CoA carboxylase is a heterohexamer composed of biotin carboxyl carrier protein (AccB), biotin carboxylase (AccC) and two subunits each of ACCase subunit alpha (AccA) and ACCase subunit beta (AccD).

It localises to the cytoplasm. The catalysed reaction is N(6)-carboxybiotinyl-L-lysyl-[protein] + acetyl-CoA = N(6)-biotinyl-L-lysyl-[protein] + malonyl-CoA. Its pathway is lipid metabolism; malonyl-CoA biosynthesis; malonyl-CoA from acetyl-CoA: step 1/1. Component of the acetyl coenzyme A carboxylase (ACC) complex. First, biotin carboxylase catalyzes the carboxylation of biotin on its carrier protein (BCCP) and then the CO(2) group is transferred by the carboxyltransferase to acetyl-CoA to form malonyl-CoA. This is Acetyl-coenzyme A carboxylase carboxyl transferase subunit alpha from Neisseria meningitidis serogroup B (strain ATCC BAA-335 / MC58).